Reading from the N-terminus, the 230-residue chain is Ion-translocating oxidoreductase complex subunit E (230 aa).

Transmembrane regions (helical) follow at residues 11–31 (GMWANNPALVQLLGLCPLLAV), 39–59 (LGLGIATLLVLVGSNVSVSLV), 69–89 (IPVFVMIIASLVTCVQLLMNA), 93–113 (GLYLSLGIFIPLIVTNCIIIG), 132–152 (FWMGLGMTSVLVVLGAMREII), and 182–202 (SFLLALLPPGAFIGVGFLIAL).

Belongs to the NqrDE/RnfAE family. As to quaternary structure, the complex is composed of six subunits: RnfA, RnfB, RnfC, RnfD, RnfE and RnfG.

The protein localises to the cell inner membrane. Its function is as follows. Part of a membrane-bound complex that couples electron transfer with translocation of ions across the membrane. The sequence is that of Ion-translocating oxidoreductase complex subunit E from Vibrio atlanticus (strain LGP32) (Vibrio splendidus (strain Mel32)).